Here is a 516-residue protein sequence, read N- to C-terminus: GMP synthase [glutamine-hydrolyzing] (516 aa).

One can recognise a Glutamine amidotransferase type-1 domain in the interval 5-199 (SIIVLDFGSQ…ARNICGVTEK (195 aa)). The active-site Nucleophile is the cysteine 82. Catalysis depends on residues histidine 173 and glutamate 175. The region spanning 200-391 (WKMEHFLKEQ…LGLPESMINR (192 aa)) is the GMPS ATP-PPase domain. Residue 227–233 (SGGVDSS) participates in ATP binding.

As to quaternary structure, homodimer.

It carries out the reaction XMP + L-glutamine + ATP + H2O = GMP + L-glutamate + AMP + diphosphate + 2 H(+). The protein operates within purine metabolism; GMP biosynthesis; GMP from XMP (L-Gln route): step 1/1. Catalyzes the synthesis of GMP from XMP. This chain is GMP synthase [glutamine-hydrolyzing], found in Sulfurimonas denitrificans (strain ATCC 33889 / DSM 1251) (Thiomicrospira denitrificans (strain ATCC 33889 / DSM 1251)).